We begin with the raw amino-acid sequence, 75 residues long: Cruzioseptin-6 (75 aa).

The signal sequence occupies residues 1–22 (MAYLKKSLFLVLFLGLVSLSIC). Positions 23 to 43 (EEEKREEENEEEQEDDDQSEE) are excised as a propeptide. The segment at 24–44 (EEKREEENEEEQEDDDQSEEK) is disordered. Acidic residues predominate over residues 30–41 (ENEEEQEDDDQS).

In terms of tissue distribution, expressed by the skin glands.

It is found in the secreted. Has antimicrobial activity. The protein is Cruzioseptin-6 of Cruziohyla calcarifer (Splendid leaf frog).